The sequence spans 364 residues: Fructose-bisphosphate aldolase C (364 aa).

A Phosphotyrosine modification is found at Y5. Phosphoserine occurs at positions 36, 39, and 45. Position 56 (R56) interacts with substrate. N6-acetyllysine is present on K111. The residue at position 132 (S132) is a Phosphoserine. K147 provides a ligand contact to substrate. The active-site Proton acceptor is the E188. The active-site Schiff-base intermediate with dihydroxyacetone-P is K230.

This sequence belongs to the class I fructose-bisphosphate aldolase family. Homotetramer. Interacts with ATP6V1E1.

It carries out the reaction beta-D-fructose 1,6-bisphosphate = D-glyceraldehyde 3-phosphate + dihydroxyacetone phosphate. Its pathway is carbohydrate degradation; glycolysis; D-glyceraldehyde 3-phosphate and glycerone phosphate from D-glucose: step 4/4. This is Fructose-bisphosphate aldolase C (ALDOC) from Pan troglodytes (Chimpanzee).